A 308-amino-acid polypeptide reads, in one-letter code: 4-diphosphocytidyl-2-C-methyl-D-erythritol kinase (308 aa).

Residue K24 is part of the active site. 118–128 (PVGAGMAGGSA) contributes to the ATP binding site. Residue D160 is part of the active site.

Belongs to the GHMP kinase family. IspE subfamily.

The enzyme catalyses 4-CDP-2-C-methyl-D-erythritol + ATP = 4-CDP-2-C-methyl-D-erythritol 2-phosphate + ADP + H(+). The protein operates within isoprenoid biosynthesis; isopentenyl diphosphate biosynthesis via DXP pathway; isopentenyl diphosphate from 1-deoxy-D-xylulose 5-phosphate: step 3/6. Catalyzes the phosphorylation of the position 2 hydroxy group of 4-diphosphocytidyl-2C-methyl-D-erythritol. The chain is 4-diphosphocytidyl-2-C-methyl-D-erythritol kinase from Bifidobacterium adolescentis (strain ATCC 15703 / DSM 20083 / NCTC 11814 / E194a).